Here is a 705-residue protein sequence, read N- to C-terminus: Rab guanine nucleotide exchange factor sec2 (705 aa).

A coiled-coil region spans residues 144–285 (QTTLDDNLVA…KSVMQGMNIA (142 aa)).

It belongs to the SEC2 family.

Functionally, guanine nucleotide exchange factor that plays an important role in regulating the growth and virulence, probably by regulating the autophagy pathway. Affects the sensitivity to cell wall disruptors and the cell wall thickness by regulating the expression levels of the cell wall integrity (CWI) pathway genes, thus coordinating the growth and virulence. Positively regulates the autophagy pathway to enhance the expression of CWI pathway genes in the presence of autophagy inducers. The protein is Rab guanine nucleotide exchange factor sec2 of Aspergillus fumigatus (strain ATCC MYA-4609 / CBS 101355 / FGSC A1100 / Af293) (Neosartorya fumigata).